The following is a 248-amino-acid chain: Deoxyribose-phosphate aldolase (248 aa).

The active-site Proton donor/acceptor is the D106. The active-site Schiff-base intermediate with acetaldehyde is K168. K197 serves as the catalytic Proton donor/acceptor.

The protein belongs to the DeoC/FbaB aldolase family. DeoC type 1 subfamily.

Its subcellular location is the cytoplasm. It catalyses the reaction 2-deoxy-D-ribose 5-phosphate = D-glyceraldehyde 3-phosphate + acetaldehyde. It functions in the pathway carbohydrate degradation; 2-deoxy-D-ribose 1-phosphate degradation; D-glyceraldehyde 3-phosphate and acetaldehyde from 2-deoxy-alpha-D-ribose 1-phosphate: step 2/2. In terms of biological role, catalyzes a reversible aldol reaction between acetaldehyde and D-glyceraldehyde 3-phosphate to generate 2-deoxy-D-ribose 5-phosphate. This chain is Deoxyribose-phosphate aldolase, found in Rhizobium meliloti (strain 1021) (Ensifer meliloti).